The chain runs to 165 residues: Phosphopantetheine adenylyltransferase (165 aa).

Thr9 is a binding site for substrate. ATP contacts are provided by residues 9–10 (TF) and His17. Lys41, Leu78, and Arg92 together coordinate substrate. ATP is bound by residues 93–95 (GLR), Glu103, and 128–134 (RQAIASK).

Belongs to the bacterial CoaD family. As to quaternary structure, homohexamer. Mg(2+) is required as a cofactor.

The protein localises to the cytoplasm. It carries out the reaction (R)-4'-phosphopantetheine + ATP + H(+) = 3'-dephospho-CoA + diphosphate. It participates in cofactor biosynthesis; coenzyme A biosynthesis; CoA from (R)-pantothenate: step 4/5. Functionally, reversibly transfers an adenylyl group from ATP to 4'-phosphopantetheine, yielding dephospho-CoA (dPCoA) and pyrophosphate. This Ruegeria pomeroyi (strain ATCC 700808 / DSM 15171 / DSS-3) (Silicibacter pomeroyi) protein is Phosphopantetheine adenylyltransferase.